A 292-amino-acid polypeptide reads, in one-letter code: Leucine-rich repeat-containing protein 10B (292 aa).

The segment at M1–R20 is disordered. Residues T7 to E16 are compositionally biased toward acidic residues. LRR repeat units follow at residues G22–L43, R45–L66, E68–P90, R91–L112, S114–V136, A137–M158, G160–M181, R183–R204, and A205–V226. The tract at residues R236–E261 is disordered.

This Homo sapiens (Human) protein is Leucine-rich repeat-containing protein 10B (LRRC10B).